The sequence spans 367 residues: Heparan sulfate glucosamine 3-O-sulfotransferase 2 (367 aa).

Residues 1–19 (MAYRVLGRAGPPQPRRARR) are Cytoplasmic-facing. Residues 20–39 (LLFAFTLSLSCTYLCYSFLC) traverse the membrane as a helical; Signal-anchor for type II membrane protein segment. Residues 40–367 (CCDGLGQSRL…ETVGQDFRWE (328 aa)) lie on the Lumenal side of the membrane. A disordered region spans residues 66-115 (LLAKSRPCDPPGPTPSEPSAPSAPAAAAPAPRLSGSNHSGSPKPGTKRLP). Positions 73-83 (CDPPGPTPSEP) are enriched in pro residues. The span at 84 to 96 (SAPSAPAAAAPAP) shows a compositional bias: low complexity. N-linked (GlcNAc...) asparagine glycosylation is present at Asn-102. 124–128 (KGGTR) contributes to the 3'-phosphoadenylyl sulfate binding site. Substrate-binding positions include 146–152 (EPHFFDR) and 177–180 (KTPS). Residue Asn-193 is glycosylated (N-linked (GlcNAc...) asparagine). 2 residues coordinate 3'-phosphoadenylyl sulfate: Arg-205 and Ser-213. The N-linked (GlcNAc...) asparagine glycan is linked to Asn-235. 245–246 (WN) is a binding site for substrate. Residue Asn-306 is glycosylated (N-linked (GlcNAc...) asparagine). Cys-313 and Cys-325 form a disulfide bridge. 330 to 334 (KGRTH) contributes to the 3'-phosphoadenylyl sulfate binding site.

Belongs to the sulfotransferase 1 family.

It is found in the golgi apparatus membrane. The enzyme catalyses alpha-D-glucosaminyl-[heparan sulfate](n) + 3'-phosphoadenylyl sulfate = 3-sulfo-alpha-D-glucosaminyl-[heparan sulfate](n) + adenosine 3',5'-bisphosphate + H(+). Its function is as follows. Sulfotransferase that utilizes 3'-phospho-5'-adenylyl sulfate (PAPS) to catalyze the transfer of a sulfo group to an N-unsubstituted glucosamine linked to a 2-O-sulfo iduronic acid unit on heparan sulfate. Catalyzes the O-sulfation of glucosamine in GlcA2S-GlcNS. Unlike HS3ST1/3-OST-1, does not convert non-anticoagulant heparan sulfate to anticoagulant heparan sulfate. The sequence is that of Heparan sulfate glucosamine 3-O-sulfotransferase 2 (Hs3st2) from Mus musculus (Mouse).